Here is a 396-residue protein sequence, read N- to C-terminus: Elongation factor Tu (396 aa).

One can recognise a tr-type G domain in the interval 10-206 (KPHVNVGTIG…ALDTYIPTPE (197 aa)). Positions 19–26 (GHVDHGKT) are G1. GTP is bound at residue 19-26 (GHVDHGKT). T26 contacts Mg(2+). Positions 60–64 (GITIN) are G2. A G3 region spans residues 81–84 (DCPG). GTP is bound by residues 81–85 (DCPGH) and 136–139 (NKAD). Residues 136–139 (NKAD) form a G4 region. The G5 stretch occupies residues 174-176 (SAK).

This sequence belongs to the TRAFAC class translation factor GTPase superfamily. Classic translation factor GTPase family. EF-Tu/EF-1A subfamily. Monomer.

The protein localises to the cytoplasm. It catalyses the reaction GTP + H2O = GDP + phosphate + H(+). Its function is as follows. GTP hydrolase that promotes the GTP-dependent binding of aminoacyl-tRNA to the A-site of ribosomes during protein biosynthesis. The protein is Elongation factor Tu of Bordetella avium (strain 197N).